Consider the following 260-residue polypeptide: MAKEWGYADHNGPDHWHELFPNAKGENQSPIELNTKEISHDPSLKPWTASYDPGSAKTILNNGKTCRVVFDDTYDRSMLRGGPLAAPYRLRQFHLHWGSSDDHGSEHSVDGVKYAAELHLVHWNSKYNSYATALKHADGIAVVGVFLKIGREKGEFQLLLDALDKIKTKGKEAPFNNFNPSCLFPACRDYWTYHGSFTTPPCEECIVWLLLKEPITVSSDQIAKLRTLYSSAENEPPVPLVRNWRPPQPIKGRIVKASFK.

Ala-2 is subject to N-acetylalanine. An Alpha-carbonic anhydrase domain is found at 3 to 259 (KEWGYADHNG…IKGRIVKASF (257 aa)). Phosphoserine is present on residues Ser-29, Ser-43, Ser-50, and Ser-55. The involved in proton transfer stretch occupies residues 64–67 (KTCR). Thr-73 is subject to Phosphothreonine. 3 residues coordinate Zn(2+): His-94, His-96, and His-119. Tyr-127 is modified (phosphotyrosine). 2 positions are modified to S-glutathionyl cysteine: Cys-182 and Cys-187. 198 to 199 (TT) serves as a coordination point for substrate. Phosphothreonine is present on Thr-216. Ser-219 carries the post-translational modification Phosphoserine.

The protein belongs to the alpha-carbonic anhydrase family. Zn(2+) is required as a cofactor. Post-translationally, S-thiolated both by thiol-disulfide exchange with glutathione disulfide and by oxyradical-initiated S-thiolation with reduced glutathione. In terms of processing, S-glutathionylated in hepatocytes under oxidative stress.

The protein localises to the cytoplasm. It carries out the reaction hydrogencarbonate + H(+) = CO2 + H2O. With respect to regulation, inhibited by acetazolamide. In terms of biological role, reversible hydration of carbon dioxide. This chain is Carbonic anhydrase 3 (CA3), found in Bos taurus (Bovine).